The chain runs to 579 residues: Mycobactin import ATP-binding/permease protein IrtB (579 aa).

At 1–25 the chain is on the cytoplasmic side; it reads MIRTLLRLVPAEKRGAVAGYAVLTL. The ABC transmembrane type-1 domain occupies 21–299; the sequence is AVLTLLSVLL…IADLAPALET (279 aa). The helical transmembrane segment at 26–46 threads the bilayer; the sequence is LSVLLRAVGAVLLIPLLAALF. The Periplasmic segment spans residues 47–48; that stretch reads SD. The chain crosses the membrane as a helical span at residues 49–69; it reads TPSDAWLWLGWLTAVTLAGWV. At 70–126 the chain is on the cytoplasmic side; it reads TDTNTARLGFDLGFAVLSRTQHDMADRLPNVAMSWFTPDNTATARQAIAATGPELAG. 2 consecutive transmembrane segments (helical) span residues 127-147 and 148-168; these read LVVN…AIGV and ALLF…AVLF. The Cytoplasmic segment spans residues 169-241; that stretch reads GALALSGRLS…RLLTMQIPGQ (73 aa). A helical transmembrane segment spans residues 242-262; sequence VLFSLAGQVALIGFAGMAVWL. Over 263–272 the chain is Periplasmic; it reads TVRGQLGVPE. The helical transmembrane segment at 273–293 threads the bilayer; the sequence is AIALIVVLVRYLEPFAAIADL. The Cytoplasmic portion of the chain corresponds to 294–579; the sequence is APALETTRAT…SEWAIGSTAR (286 aa). The ABC transporter domain occupies 332-565; sequence IEFDDVRFSY…GGRFAQFWAQ (234 aa). ATP is bound at residue 364–371; the sequence is GPSGSGKT.

Belongs to the ABC transporter superfamily. Siderophore-Fe(3+) uptake transporter (SIUT) (TC 3.A.1.21) family. In terms of assembly, forms a heterodimer with IrtA.

It localises to the cell inner membrane. Its activity is regulated as follows. The ATPase activity of IrtAB is stimulated more than 38-fold in the presence of Fe-MBT, and more than 10-fold in the presence of Fe-cMBT. In terms of biological role, part of the ABC transporter complex IrtAB involved in the import of iron-bound mycobactin (Fe-MBT) and carboxymycobactin (Fe-cMBT). Has a preference for Fe-MBT over Fe-cMBT. Transmembrane domains (TMD) form a pore in the membrane and the ATP-binding domain (NBD) is responsible for energy generation. This is Mycobactin import ATP-binding/permease protein IrtB from Mycolicibacterium thermoresistibile (strain ATCC 19527 / DSM 44167 / CIP 105390 / JCM 6362 / NCTC 10409 / 316) (Mycobacterium thermoresistibile).